A 377-amino-acid chain; its full sequence is Heat stress transcription factor B-2b (377 aa).

The disordered stretch occupies residues Met-1 to Ile-56. Residues Gly-14–Asp-51 are compositionally biased toward gly residues. The DNA-binding element occupies Pro-57 to Ile-151. Positions Thr-220–Thr-265 are hydrophobic repeat HR-A/B. A Nuclear localization signal motif is present at residues Lys-323–Arg-327. The segment at Arg-326 to Lys-377 is disordered. Positions Leu-331–Asp-340 are enriched in acidic residues.

This sequence belongs to the HSF family. Class B subfamily. In terms of assembly, homotrimer. In terms of processing, exhibits temperature-dependent phosphorylation.

It localises to the nucleus. Its function is as follows. Transcriptional regulator that specifically binds DNA sequence 5'-AGAAnnTTCT-3' known as heat shock promoter elements (HSE). The polypeptide is Heat stress transcription factor B-2b (HSFB2B) (Arabidopsis thaliana (Mouse-ear cress)).